The primary structure comprises 1091 residues: Rho GTPase-activating protein 7 (1091 aa).

Residues 11-78 (LTQIEAKEAC…LNKCAVMKLE (68 aa)) enclose the SAM domain. A phosphoserine mark is found at serine 86, serine 89, and serine 129. Disordered stretches follow at residues 120–181 (SPKQ…TTPR), 296–329 (RSVS…TRSL), 402–439 (RTGS…SSRM), and 491–552 (SDEG…SGVG). Residues 130 to 143 (PDNSRLQSATSRES) show a composition bias toward polar residues. Low complexity-rich tracts occupy residues 155 to 166 (SSIRSLSSTSSS) and 298 to 324 (VSNS…SPVT). The tract at residues 274–447 (QLNCVEISAL…RMSIYDNVPG (174 aa)) is focal adhesion-targeting (FAT). Serine 321 carries the post-translational modification Phosphoserine. The span at 414-425 (LRRENSSDSPKE) shows a compositional bias: basic and acidic residues. Positions 499–511 (ALDSVSPCPSSPK) are enriched in polar residues. A compositionally biased stretch (basic and acidic residues) spans 513–525 (IHLDVDHDRRTPS). Residues 526–535 (DLDSTGNSLN) are compositionally biased toward polar residues. The segment at 614-636 (KHGFSWAVPKFMKRIKVPDYKDR) is polybasic cluster (PBR). In terms of domain architecture, Rho-GAP spans 641–847 (VPLTVNVQRS…HMIAECKKLF (207 aa)). The region spanning 877-1084 (SNDQPADYRH…RDSFSNQSTE (208 aa)) is the START domain.

As to quaternary structure, interacts with EF1A1, facilitates EF1A1 distribution to the membrane periphery and ruffles upon growth factor stimulation and suppresses cell migration. Interacts with tensin TNS1 (via N-terminus); the interaction is decreased by phosphorylation of TNS1. Interacts with TNS3 and PTEN; in resting cells, interacts with TNS3 (via C2 tensin-type domain) but, following growth factor stimulation, TNS3 and PTEN are phosphorylated which leads to weakened interaction with TNS3 and enhanced interaction with PTEN. Interacts (via C-terminus) with tensin TNS4 (via SH2 domain); the interaction is independent of tyrosine phosphorylation of DLC1.

The protein resides in the cytoplasm. The protein localises to the cell junction. It localises to the focal adhesion. Its subcellular location is the membrane. In terms of biological role, functions as a GTPase-activating protein for the small GTPases RHOA, RHOB, RHOC and CDC42, terminating their downstream signaling. This induces morphological changes and detachment through cytoskeletal reorganization, playing a critical role in biological processes such as cell migration and proliferation. Also functions in vivo as an activator of the phospholipase PLCD1. Active DLC1 increases cell migration velocity but reduces directionality. Required for growth factor-induced epithelial cell migration; in resting cells, interacts with TNS3 while PTEN interacts with the p85 regulatory subunit of the PI3K kinase complex but growth factor stimulation induces phosphorylation of TNS3 and PTEN, causing them to change their binding preference so that PTEN interacts with DLC1 and TNS3 interacts with p85. The PTEN-DLC1 complex translocates to the posterior of migrating cells to activate RHOA while the TNS3-p85 complex translocates to the leading edge of migrating cells to promote RAC1 activation. The protein is Rho GTPase-activating protein 7 (Dlc1) of Rattus norvegicus (Rat).